A 209-amino-acid polypeptide reads, in one-letter code: Large ribosomal subunit protein bL25 (209 aa).

Residues S185–E209 form a disordered region. The span at G190–E209 shows a compositional bias: acidic residues.

The protein belongs to the bacterial ribosomal protein bL25 family. CTC subfamily. Part of the 50S ribosomal subunit; part of the 5S rRNA/L5/L18/L25 subcomplex. Contacts the 5S rRNA. Binds to the 5S rRNA independently of L5 and L18.

Functionally, this is one of the proteins that binds to the 5S RNA in the ribosome where it forms part of the central protuberance. This Syntrophomonas wolfei subsp. wolfei (strain DSM 2245B / Goettingen) protein is Large ribosomal subunit protein bL25.